The sequence spans 214 residues: Large ribosomal subunit protein uL16 (214 aa).

Position 32 is a citrulline (Arg-32). Lys-175 participates in a covalent cross-link: Glycyl lysine isopeptide (Lys-Gly) (interchain with G-Cter in SUMO2). Residue Lys-188 forms a Glycyl lysine isopeptide (Lys-Gly) (interchain with G-Cter in ubiquitin) linkage.

It belongs to the universal ribosomal protein uL16 family. Component of the large ribosomal subunit. Mature ribosomes consist of a small (40S) and a large (60S) subunit. The 40S subunit contains about 33 different proteins and 1 molecule of RNA (18S). The 60S subunit contains about 49 different proteins and 3 molecules of RNA (28S, 5.8S and 5S). In terms of processing, citrullinated by PADI4. Post-translationally, ufmylated by UFL1.

The protein localises to the cytoplasm. Component of the large ribosomal subunit. Plays a role in the formation of actively translating ribosomes. May play a role in the embryonic brain development. In Bos taurus (Bovine), this protein is Large ribosomal subunit protein uL16.